A 109-amino-acid polypeptide reads, in one-letter code: Protein reprimo (109 aa).

Residues Asn-7 and Asn-18 are each glycosylated (N-linked (GlcNAc...) asparagine). The chain crosses the membrane as a helical span at residues 56–76; it reads VVQIAVMCVLSLTVVFGIFFL. Residue Ser-98 is modified to Phosphoserine.

Belongs to the reprimo family.

The protein resides in the cytoplasm. The protein localises to the membrane. Functionally, may be involved in the regulation of p53-dependent G2 arrest of the cell cycle. Seems to induce cell cycle arrest by inhibiting CDK1 activity and nuclear translocation of the CDC2 cyclin B1 complex. The sequence is that of Protein reprimo (RPRM) from Bos taurus (Bovine).